Reading from the N-terminus, the 362-residue chain is E3 ubiquitin-protein ligase TM129 (362 aa).

Residues 1–6 (MDSPEV) lie on the Lumenal side of the membrane. A helical transmembrane segment spans residues 7–27 (TFTLAYLVFAVCFVFTPNEFY). Residues 28–56 (SAGLTVQNLLSGWLGSEDAAFVPYHLRRT) lie on the Cytoplasmic side of the membrane. Residues 57–77 (SATLLCHSLLPLGYYMGMCFA) traverse the membrane as a helical segment. At 78 to 94 (ASEKQLYSPGQAPEAWQ) the chain is on the lumenal side. A helical membrane pass occupies residues 95 to 115 (LFLLLAVTLPLLSCTLIYYWS). At 116 to 362 (WDRWTRHPLA…FCILDVCCVR (247 aa)) the chain is on the cytoplasmic side. Residues 285 to 350 (CIGCMQTRAS…ASRVPCPTCR (66 aa)) form an RING-type; degenerate zinc finger.

Belongs to the TMEM129 family. As to quaternary structure, integral component of ER-resident dislocation complexes.

It is found in the endoplasmic reticulum membrane. It carries out the reaction S-ubiquitinyl-[E2 ubiquitin-conjugating enzyme]-L-cysteine + [acceptor protein]-L-lysine = [E2 ubiquitin-conjugating enzyme]-L-cysteine + N(6)-ubiquitinyl-[acceptor protein]-L-lysine.. It participates in protein modification; protein ubiquitination. E3 ubiquitin-protein ligase involved in ER-associated protein degradation, preferentially associates with the E2 enzyme UBE2J2. Exploited by viral US11 proteins to mediate HLA class I proteins degradation. This chain is E3 ubiquitin-protein ligase TM129 (Tmem129), found in Mus musculus (Mouse).